We begin with the raw amino-acid sequence, 303 residues long: Small ribosomal subunit protein uS2 (303 aa).

Residues 267-303 are disordered; it reads AESLSMAEEPAPPSQRKGPASETAEPVAEPAVTESGS.

The protein belongs to the universal ribosomal protein uS2 family.

This Solibacter usitatus (strain Ellin6076) protein is Small ribosomal subunit protein uS2.